A 1039-amino-acid polypeptide reads, in one-letter code: Probable calcium-transporting ATPase 9, plasma membrane-type (1039 aa).

Topologically, residues 1–175 are cytoplasmic; sequence MEKLDRYLQE…FVWDALQDMT (175 aa). Transmembrane regions (helical) follow at residues 176–196 and 199–219; these read LIILMVCALLSVAVGLATEGW and GMYDGLGIILSIFLVVMVTAV. Topologically, residues 220 to 250 are cytoplasmic; the sequence is SDYKQSLQFKELDNEKKKIFIHVTRDGRRQK. The next 2 helical transmembrane spans lie at 251-271 and 353-373; these read ISIYDLVVGDIVHLSIGDQVP and VATIIGKIGLVFAILTFLVLL. Over 374–406 the chain is Cytoplasmic; that stretch reads VRFLIDKGMTVGLLKWYSTDALTIVNYFATAVT. Residues 407–427 form a helical membrane-spanning segment; that stretch reads IIVVAVPEGLPLAVTLSLAFA. Asp456 serves as the catalytic 4-aspartylphosphate intermediate. The Mg(2+) site is built by Asp758 and Asp762. A helical membrane pass occupies residues 825–845; sequence IVALVINFVSACIIGSAPLTA. Topologically, residues 846 to 847 are cytoplasmic; the sequence is VQ. 2 consecutive transmembrane segments (helical) span residues 848–868 and 892–912; these read LLWVNMIMDTLGALALATEPP and NIMGQSLYQLFVLGALMFGGE. Over 913–960 the chain is Cytoplasmic; it reads RLLNIKGADSKSIINTLIFNSFVFCQVFNEINSREMQKINVFRGIISN. The next 2 membrane-spanning stretches (helical) occupy residues 961–981 and 995–1015; these read WIFIAVIAATVAFQVVIIEFL and WLLSVGLGSISLIVGVILKCI. Topologically, residues 1016–1039 are cytoplasmic; the sequence is PVGSGETSATPNGYRPLANGPDDI.

It belongs to the cation transport ATPase (P-type) (TC 3.A.3) family. Type IIB subfamily.

The protein localises to the membrane. The enzyme catalyses Ca(2+)(in) + ATP + H2O = Ca(2+)(out) + ADP + phosphate + H(+). With respect to regulation, activated by calmodulin. This magnesium-dependent enzyme catalyzes the hydrolysis of ATP coupled with the translocation of calcium from the cytosol out of the cell, into the endoplasmic reticulum, or into organelles. The protein is Probable calcium-transporting ATPase 9, plasma membrane-type of Oryza sativa subsp. japonica (Rice).